The following is a 349-amino-acid chain: 4-hydroxy-3-methylbut-2-en-1-yl diphosphate synthase (flavodoxin) (349 aa).

[4Fe-4S] cluster-binding residues include C265, C268, C300, and E307.

It belongs to the IspG family. [4Fe-4S] cluster serves as cofactor.

It carries out the reaction (2E)-4-hydroxy-3-methylbut-2-enyl diphosphate + oxidized [flavodoxin] + H2O + 2 H(+) = 2-C-methyl-D-erythritol 2,4-cyclic diphosphate + reduced [flavodoxin]. It functions in the pathway isoprenoid biosynthesis; isopentenyl diphosphate biosynthesis via DXP pathway; isopentenyl diphosphate from 1-deoxy-D-xylulose 5-phosphate: step 5/6. In terms of biological role, converts 2C-methyl-D-erythritol 2,4-cyclodiphosphate (ME-2,4cPP) into 1-hydroxy-2-methyl-2-(E)-butenyl 4-diphosphate. The chain is 4-hydroxy-3-methylbut-2-en-1-yl diphosphate synthase (flavodoxin) from Thermodesulfovibrio yellowstonii (strain ATCC 51303 / DSM 11347 / YP87).